The primary structure comprises 156 residues: Small ribosomal subunit protein uS7 (156 aa).

This sequence belongs to the universal ribosomal protein uS7 family. As to quaternary structure, part of the 30S ribosomal subunit. Contacts proteins S9 and S11.

In terms of biological role, one of the primary rRNA binding proteins, it binds directly to 16S rRNA where it nucleates assembly of the head domain of the 30S subunit. Is located at the subunit interface close to the decoding center, probably blocks exit of the E-site tRNA. The sequence is that of Small ribosomal subunit protein uS7 from Rhizobium rhizogenes (strain K84 / ATCC BAA-868) (Agrobacterium radiobacter).